The sequence spans 87 residues: Small ribosomal subunit protein bS20 (87 aa).

It belongs to the bacterial ribosomal protein bS20 family.

Binds directly to 16S ribosomal RNA. The chain is Small ribosomal subunit protein bS20 from Clostridium perfringens (strain ATCC 13124 / DSM 756 / JCM 1290 / NCIMB 6125 / NCTC 8237 / Type A).